Here is a 131-residue protein sequence, read N- to C-terminus: Large ribosomal subunit protein bL19 (131 aa).

The protein belongs to the bacterial ribosomal protein bL19 family.

Functionally, this protein is located at the 30S-50S ribosomal subunit interface and may play a role in the structure and function of the aminoacyl-tRNA binding site. This chain is Large ribosomal subunit protein bL19, found in Rhodopseudomonas palustris (strain BisB18).